Here is a 512-residue protein sequence, read N- to C-terminus: Ribose import ATP-binding protein RbsA 2 (512 aa).

ABC transporter domains are found at residues 22 to 258 and 263 to 512; these read LEMR…VGRD and FPKV…TGNA. 54 to 61 contacts ATP; sequence GENGAGKS.

This sequence belongs to the ABC transporter superfamily. Ribose importer (TC 3.A.1.2.1) family. The complex is composed of an ATP-binding protein (RbsA), two transmembrane proteins (RbsC) and a solute-binding protein (RbsB).

It localises to the cell inner membrane. It carries out the reaction D-ribose(out) + ATP + H2O = D-ribose(in) + ADP + phosphate + H(+). In terms of biological role, part of the ABC transporter complex RbsABC involved in ribose import. Responsible for energy coupling to the transport system. The sequence is that of Ribose import ATP-binding protein RbsA 2 from Rhizobium johnstonii (strain DSM 114642 / LMG 32736 / 3841) (Rhizobium leguminosarum bv. viciae).